Reading from the N-terminus, the 122-residue chain is Small ribosomal subunit protein uS13 (122 aa).

The segment at Arg99–Lys122 is disordered.

Belongs to the universal ribosomal protein uS13 family. In terms of assembly, part of the 30S ribosomal subunit. Forms a loose heterodimer with protein S19. Forms two bridges to the 50S subunit in the 70S ribosome.

Located at the top of the head of the 30S subunit, it contacts several helices of the 16S rRNA. In the 70S ribosome it contacts the 23S rRNA (bridge B1a) and protein L5 of the 50S subunit (bridge B1b), connecting the 2 subunits; these bridges are implicated in subunit movement. Contacts the tRNAs in the A and P-sites. In Rhizobium leguminosarum bv. trifolii (strain WSM2304), this protein is Small ribosomal subunit protein uS13.